We begin with the raw amino-acid sequence, 167 residues long: RNA pyrophosphohydrolase (167 aa).

One can recognise a Nudix hydrolase domain in the interval 8-159; the sequence is PYRTCVGVML…KRPVYERVVK (152 aa). The short motif at 47 to 68 is the Nudix box element; that stretch reads GGVDPGEDTWAAAKRELYEETS.

The protein belongs to the Nudix hydrolase family. RppH subfamily. A divalent metal cation is required as a cofactor.

Its function is as follows. Accelerates the degradation of transcripts by removing pyrophosphate from the 5'-end of triphosphorylated RNA, leading to a more labile monophosphorylated state that can stimulate subsequent ribonuclease cleavage. The protein is RNA pyrophosphohydrolase of Bradyrhizobium diazoefficiens (strain JCM 10833 / BCRC 13528 / IAM 13628 / NBRC 14792 / USDA 110).